The chain runs to 132 residues: MNTDPIADYLTRIRNANAANHRVVEIPASNVKKEITKILFDQGYILSYKFEDTTAQGTIKIALKYDKLTKEPVIKKIQRISKPGLRKYAGSTEIPRILNGLGIAVVSTSHGVMTGKQAKANKVGGEVLCYVY.

The protein belongs to the universal ribosomal protein uS8 family. Part of the 30S ribosomal subunit. Contacts proteins S5 and S12.

Its function is as follows. One of the primary rRNA binding proteins, it binds directly to 16S rRNA central domain where it helps coordinate assembly of the platform of the 30S subunit. This Christiangramia forsetii (strain DSM 17595 / CGMCC 1.15422 / KT0803) (Gramella forsetii) protein is Small ribosomal subunit protein uS8.